A 381-amino-acid chain; its full sequence is Beta-lactamase CMY-4 (381 aa).

The signal sequence occupies residues 1–20; that stretch reads MMKKSLCCALLLTASFSTFA. Ser-84 (acyl-ester intermediate) is an active-site residue. A beta-lactam contacts are provided by Ser-84, Gln-140, Tyr-170, and Asn-172.

It belongs to the class-C beta-lactamase family.

The enzyme catalyses a beta-lactam + H2O = a substituted beta-amino acid. In terms of biological role, class C beta-lactamase which confers resistance to penicillins and cephalosporins. The protein is Beta-lactamase CMY-4 of Klebsiella pneumoniae.